The sequence spans 111 residues: UPF0122 protein YofM (111 aa).

This sequence belongs to the UPF0122 family.

Might take part in the signal recognition particle (SRP) pathway. This is inferred from the conservation of its genetic proximity to ftsY/ffh. May be a regulatory protein. This chain is UPF0122 protein YofM (yofM), found in Lactococcus lactis subsp. lactis (strain IL1403) (Streptococcus lactis).